Consider the following 514-residue polypeptide: Putative ankyrin repeat protein R863 (514 aa).

ANK repeat units follow at residues 45–74 (AKID…LKHP), 84–114 (KSLN…DINS), 115–144 (KKNR…DVRA), 146–174 (KDYA…NIKV), 176–204 (DNFA…NIRA), 205–234 (DNNY…DIRA), 236–264 (NNYA…NVKS), 266–294 (NDCA…DVRS), 295–324 (ENDY…NVRA), 325–354 (DNNY…NIRS), 356–384 (NDYA…NFKS), 385–414 (DYDC…DIRV), 415–444 (NNDY…DIRA), 446–474 (NDYA…NVKA), and 476–504 (NNYA…DVRS).

The protein is Putative ankyrin repeat protein R863 of Acanthamoeba polyphaga mimivirus (APMV).